Consider the following 486-residue polypeptide: Protein DETOXIFICATION 53 (486 aa).

12 consecutive transmembrane segments (helical) span residues 15–35 (CPIVMTSLLIFSRSIISMWFL), 45–65 (GGALAMGFGNITGVSVLKGLS), 94–114 (LLIVVSVPIAVTWLNIEPIFL), 130–150 (MLFFVPELLAQAMLHPLRTFL), 159–179 (LTISAIVSILLHPLFNYVFVV), 187–207 (GVAIAMAFNTMNIDVGLLVYT), 240–260 (AISVCLEYWWYEIMLFLCGLL), 267–287 (VAAMGILIQTTGILYVVPFAI), 312–332 (VIGLILAVAYGLAAAVFVTAL), 346–366 (ILGLISAALPILGLCEIGNSP), 386–406 (VNLCAFYIVGLPVAVTTTFGF), and 413–433 (LWFGLLSAQMTCLVMMLYTLI). The disordered stretch occupies residues 448 to 474 (TSAAADKSHSEDETVHAEVQDDDDVSS). A compositionally biased stretch (basic and acidic residues) spans 453 to 466 (DKSHSEDETVHAEV).

It belongs to the multi antimicrobial extrusion (MATE) (TC 2.A.66.1) family.

The protein resides in the membrane. In Arabidopsis thaliana (Mouse-ear cress), this protein is Protein DETOXIFICATION 53.